Reading from the N-terminus, the 104-residue chain is ATP-dependent Clp protease adapter protein ClpS (104 aa).

It belongs to the ClpS family. In terms of assembly, binds to the N-terminal domain of the chaperone ClpA.

In terms of biological role, involved in the modulation of the specificity of the ClpAP-mediated ATP-dependent protein degradation. The chain is ATP-dependent Clp protease adapter protein ClpS from Bordetella bronchiseptica (strain ATCC BAA-588 / NCTC 13252 / RB50) (Alcaligenes bronchisepticus).